Here is a 408-residue protein sequence, read N- to C-terminus: NADH-quinone oxidoreductase subunit D (408 aa).

This sequence belongs to the complex I 49 kDa subunit family. As to quaternary structure, NDH-1 is composed of 14 different subunits. Subunits NuoB, C, D, E, F, and G constitute the peripheral sector of the complex.

It localises to the cell inner membrane. It catalyses the reaction a quinone + NADH + 5 H(+)(in) = a quinol + NAD(+) + 4 H(+)(out). In terms of biological role, NDH-1 shuttles electrons from NADH, via FMN and iron-sulfur (Fe-S) centers, to quinones in the respiratory chain. The immediate electron acceptor for the enzyme in this species is believed to be ubiquinone. Couples the redox reaction to proton translocation (for every two electrons transferred, four hydrogen ions are translocated across the cytoplasmic membrane), and thus conserves the redox energy in a proton gradient. This chain is NADH-quinone oxidoreductase subunit D, found in Campylobacter jejuni subsp. jejuni serotype O:23/36 (strain 81-176).